We begin with the raw amino-acid sequence, 951 residues long: Valine--tRNA ligase (951 aa).

The 'HIGH' region signature appears at 40 to 50; the sequence is PNVTGSLHMGH. The short motif at 551–555 is the 'KMSKS' region element; it reads KMSKS. Position 554 (K554) interacts with ATP. Residues 879–950 are a coiled coil; the sequence is MAGLIDVEAE…LLEQKAKIES (72 aa).

This sequence belongs to the class-I aminoacyl-tRNA synthetase family. ValS type 1 subfamily. In terms of assembly, monomer.

Its subcellular location is the cytoplasm. The catalysed reaction is tRNA(Val) + L-valine + ATP = L-valyl-tRNA(Val) + AMP + diphosphate. Functionally, catalyzes the attachment of valine to tRNA(Val). As ValRS can inadvertently accommodate and process structurally similar amino acids such as threonine, to avoid such errors, it has a 'posttransfer' editing activity that hydrolyzes mischarged Thr-tRNA(Val) in a tRNA-dependent manner. The polypeptide is Valine--tRNA ligase (Pseudoalteromonas translucida (strain TAC 125)).